We begin with the raw amino-acid sequence, 78 residues long: Large ribosomal subunit protein bL28 (78 aa).

It belongs to the bacterial ribosomal protein bL28 family.

This Synechococcus sp. (strain ATCC 27144 / PCC 6301 / SAUG 1402/1) (Anacystis nidulans) protein is Large ribosomal subunit protein bL28.